The chain runs to 80 residues: Protein pegasus (80 aa).

The signal sequence occupies residues 1 to 22; the sequence is MKLSAVLLAIALLALSLVQCLG. The 57-residue stretch at 24-80 folds into the Kazal-like domain; that stretch reads PDPSTKCVMECDTQEYRSICAADDKGSTKTYRNLCVMKTENCLQNANFQKISDKECP. 3 cysteine pairs are disulfide-bonded: Cys30–Cys65, Cys34–Cys58, and Cys43–Cys79.

Interacts with wg; the interaction facilitates short-range diffusion of wg. Strongly expressed in the developing fly wing but is excluded from the presumptive wing margin.

The protein localises to the secreted. In terms of biological role, increases short-range diffusion of the wingless/wg protein, enhancing its signaling and expression of target genes required for wing margin morphogenesis. May act as a serine protease inhibitor since it possess the Kazal serine protease inhibitor signature. In Drosophila melanogaster (Fruit fly), this protein is Protein pegasus.